An 823-amino-acid chain; its full sequence is Polyadenylation and cleavage factor homolog 11 (823 aa).

Residues Ser-3–Asp-135 form the CID domain. Disordered regions lie at residues Asn-142–Thr-176, Ser-188–Lys-301, Ser-340–Pro-395, Leu-570–Ser-643, and Trp-728–Ser-755. Polar residues-rich tracts occupy residues Ala-157–Thr-176 and Ser-188–Lys-198. Positions Val-200–Asp-226 are enriched in basic and acidic residues. 2 stretches are compositionally biased toward low complexity: residues Lys-227 to Ala-242 and Ala-342 to Pro-353. Positions Pro-374–Gln-390 are enriched in pro residues. Residues Pro-571–Arg-581 are compositionally biased toward low complexity. The span at Gln-609–Asn-624 shows a compositional bias: polar residues.

This is Polyadenylation and cleavage factor homolog 11 (pcf-11) from Caenorhabditis elegans.